The primary structure comprises 453 residues: Serine incorporator 1 (453 aa).

The N-myristoyl glycine moiety is linked to residue G2. Residues 2 to 39 (GSVLGLCSMASWIPCLCGSAPCLLCRCCPSGNNSTVTR) are Cytoplasmic-facing. Residues 40-60 (LIYALFLLVGVCVACVMLIPG) form a helical membrane-spanning segment. The Lumenal portion of the chain corresponds to 61-88 (MEEQLNKIPGFCENEKGMVPCNILVGYK). The chain crosses the membrane as a helical span at residues 89–109 (AVYRLCFGLAMFYLLLSLLMI). Residues 110 to 123 (KVKSSSDPRAAIHN) lie on the Cytoplasmic side of the membrane. The chain crosses the membrane as a helical span at residues 124-144 (GFWFFKFAAAIAIIIGAFFIP). At 145–151 (EGTFTTV) the chain is on the lumenal side. A helical membrane pass occupies residues 152–172 (WFYVGMAGAFCFILIQLVLLI). At 173 to 197 (DFAHSWNESWVEKMEEGNSRCWYAA) the chain is on the cytoplasmic side. Residues 198–218 (LLSATALNYLLSLVAVVLFFV) form a helical membrane-spanning segment. The Lumenal segment spans residues 219 to 231 (YYTHPASCAENKA). Residues 232-252 (FISVNMLLCLGASIMSILPKI) form a helical membrane-spanning segment. The Cytoplasmic segment spans residues 253-259 (QESQPRS). Residues 260 to 280 (GLLQSSVITVYTMYLTWSAMT) traverse the membrane as a helical segment. Residues 281–309 (NEPETECNPSLLNIIGYNTTSTVSKEGQS) are Lumenal-facing. The chain crosses the membrane as a helical span at residues 310 to 330 (VQWWHTQGIIGLILFLLCVFY). The Cytoplasmic portion of the chain corresponds to 331 to 387 (SSIRTSNNSQVNKLTLTSDESTLIEDGGARNDGSLEDGDDVHRAVDNERDGVTYSYS). S351 carries the phosphoserine modification. T352 is modified (phosphothreonine). A Phosphoserine modification is found at S364. The chain crosses the membrane as a helical span at residues 388–408 (FFHFMLFLASLYIMMTLTNWY). Topologically, residues 409 to 426 (RYEPSREMKSQWTAVWVK) are lumenal. A helical transmembrane segment spans residues 427-447 (ISSSWIGIVLYVWTLVAPLVL). The Cytoplasmic segment spans residues 448 to 453 (TNRDFD).

The protein belongs to the TDE1 family. Interacts with SPTLC1.

It localises to the endoplasmic reticulum membrane. Its function is as follows. Enhances the incorporation of serine into phosphatidylserine and sphingolipids. The protein is Serine incorporator 1 (SERINC1) of Bos taurus (Bovine).